The chain runs to 194 residues: Putative manganese efflux pump MntP (194 aa).

6 consecutive transmembrane segments (helical) span residues 2-22, 43-63, 67-87, 111-131, 137-157, and 174-194; these read ISII…AFAV, LWFG…ASTF, VTQF…GNMV, PLAV…AFMF, AFAI…GLHI, and GVVL…VIAF.

This sequence belongs to the MntP (TC 9.B.29) family.

It is found in the cell membrane. Probably functions as a manganese efflux pump. The protein is Putative manganese efflux pump MntP of Bifidobacterium longum (strain DJO10A).